Reading from the N-terminus, the 86-residue chain is U-actitoxin-Avd10a (86 aa).

The signal sequence occupies residues 1–20; sequence MSRIAILLFVAFLLVAGISA. Positions 21 to 42 are excised as a propeptide; the sequence is KSTAHFKKNVLADLFKERRFNA. In terms of domain architecture, ShKT spans 51 to 86; the sequence is CVNIDVDSFCDGMAERGACNIIPQMATNCAKACNSC. 3 cysteine pairs are disulfide-bonded: Cys51/Cys86, Cys60/Cys79, and Cys69/Cys83.

It belongs to the sea anemone type 1 potassium channel toxin family. Type 1b subfamily.

Its subcellular location is the secreted. It localises to the nematocyst. Functionally, inhibits voltage-gated potassium channels (Kv1/KCNA). The polypeptide is U-actitoxin-Avd10a (Anemonia viridis (Snakelocks anemone)).